The primary structure comprises 148 residues: Protein SOB FIVE-LIKE 1 (148 aa).

A compositionally biased stretch (basic and acidic residues) spans 1–10 (MESPRNHGGS). Disordered regions lie at residues 1–20 (MESP…SCES) and 33–148 (NDQS…SKTK). The SOFL-A motif lies at 20 to 25 (SGWTMY). Over residues 54–76 (DGYENDDGDTSDDGGDEESDDSM) the composition is skewed to acidic residues. The SOFL-B signature appears at 75–84 (SMASDASSGP). A compositionally biased stretch (basic residues) spans 91-101 (HINKHAARKNG). Positions 111 to 128 (QHTEKTISNEGEKSDLKA) are enriched in basic and acidic residues.

This sequence belongs to the SOFL plant protein family. As to expression, predominantly expressed in the vascular tissues of seedlings, developing leaves, flowers and siliques, but barely detectable in roots and stems.

It is found in the cytoplasm. Its subcellular location is the nucleus. Its function is as follows. Involved in cytokinin-mediated development. Together with SOFL2, triggers the endogenous content of specific bioactive cytokinins derived from the biosynthetic intermediates trans-zeatin riboside monophosphate (tZRMP) and N(6)-(Delta(2)-isopentenyl)adenosine monophosphate (iPRMP) such as N-glucosides trans-zeatin 7-glucoside (tZ7G), cis-zeatin 7-glucoside (cZ7G) and N(6)-(Delta(2)-isopentenyl)adenine 7-glucoside (iP7G). In Arabidopsis thaliana (Mouse-ear cress), this protein is Protein SOB FIVE-LIKE 1.